The sequence spans 294 residues: Shikimate dehydrogenase (NADP(+)) (294 aa).

Residues 23–25 and T76 each bind shikimate; that span reads SRS. K80 serves as the catalytic Proton acceptor. 2 residues coordinate shikimate: N101 and D116. NADP(+) is bound by residues 141–145 and M233; that span reads GAGGA. A shikimate-binding site is contributed by Y235. Residue G256 coordinates NADP(+).

The protein belongs to the shikimate dehydrogenase family. As to quaternary structure, homodimer.

The enzyme catalyses shikimate + NADP(+) = 3-dehydroshikimate + NADPH + H(+). It functions in the pathway metabolic intermediate biosynthesis; chorismate biosynthesis; chorismate from D-erythrose 4-phosphate and phosphoenolpyruvate: step 4/7. Involved in the biosynthesis of the chorismate, which leads to the biosynthesis of aromatic amino acids. Catalyzes the reversible NADPH linked reduction of 3-dehydroshikimate (DHSA) to yield shikimate (SA). The polypeptide is Shikimate dehydrogenase (NADP(+)) (Methylibium petroleiphilum (strain ATCC BAA-1232 / LMG 22953 / PM1)).